The primary structure comprises 115 residues: Protein V2 (115 aa).

This sequence belongs to the geminiviridae protein AV2/V2 family. In terms of assembly, interacts with host SGS3.

Its subcellular location is the host cytoplasm. It is found in the host perinuclear region. In terms of biological role, through its interaction with host SGS3, acts as a suppressor of RNA-mediated gene silencing, also known as post-transcriptional gene silencing (PTGS), a mechanism of plant viral defense that limits the accumulation of viral RNAs. In Tomato yellow leaf curl Sardinia virus (TYLCSV), this protein is Protein V2.